The primary structure comprises 2177 residues: Protein sidekick-2 (2177 aa).

The N-terminal stretch at 1–26 is a signal peptide; it reads MKGLGVPAAALLWGGLSALLPPSLPA. Residues 27-1937 are Extracellular-facing; that stretch reads DDVSPYFKTE…ANPFYEEWWF (1911 aa). Ig-like C2-type domains are found at residues 31–113, 118–205, 220–299, 313–401, 407–496, and 501–590; these read PYFK…TEVQ, GSFE…QPIT, PTII…SSVP, PQFV…TYLA, PNIT…ADLV, and TRIT…AHLR. C53 and C96 are joined by a disulfide. N-linked (GlcNAc...) asparagine glycosylation is found at N198 and N228. 2 cysteine pairs are disulfide-bonded: C242/C289 and C335/C385. An N-linked (GlcNAc...) asparagine glycan is attached at N408. 2 disulfide bridges follow: C428/C480 and C522/C574. N-linked (GlcNAc...) asparagine glycosylation is found at N582, N614, N709, N748, N809, N941, and N953. Fibronectin type-III domains are found at residues 597-693, 698-794, 799-898, 902-996, 1000-1099, 1104-1202, 1207-1304, 1305-1402, 1407-1504, 1509-1626, 1631-1727, 1731-1826, and 1829-1928; these read APES…LPEE, PPQN…TLQG, PPGN…THED, PVGH…VPPE, APTN…TLQA, APAN…TRES, GPSN…TLDD, VPGP…TEKR, PPSK…TLQA, APTI…VGEA, APQN…TQQA, APGS…TGPG, and APGP…AQKA. 11 N-linked (GlcNAc...) asparagine glycosylation sites follow: N1107, N1210, N1261, N1346, N1462, N1580, N1593, N1675, N1694, N1746, and N1820. The helical transmembrane segment at 1938-1958 threads the bilayer; that stretch reads LVVIALVGLIFILLLVFVLII. At 1959-2177 the chain is on the cytoplasmic side; it reads RGQSKKYAKK…APIGGFSSFV (219 aa). Disordered stretches follow at residues 2044–2071 and 2103–2177; these read AESSSLTEKPSEVSDSQGSDSEYEVDPA and QAYS…SSFV. Polar residues-rich tracts occupy residues 2045–2063 and 2119–2130; these read ESSSLTEKPSEVSDSQGSD and PLSNSTSTQQGS. Positions 2142-2151 are enriched in pro residues; it reads PQTPGNPPSQ. A PDZ-binding motif is present at residues 2171 to 2177; that stretch reads GGFSSFV.

This sequence belongs to the sidekick family. Homodimer; mediates homophilic interactions to promote cell adhesion. In terms of tissue distribution, expressed by non-overlapping subsets of retinal neurons. SDK1, SDK2, DSCAM and DSCAML1 are expressed in non-overlapping subsets of interneurons and retinal ganglion cells (RGCs) that form synapses in distinct inner plexiform layer (IPL) sublaminae.

The protein resides in the cell membrane. It localises to the synapse. Its function is as follows. Adhesion molecule that promotes lamina-specific synaptic connections in the retina. Expressed in specific subsets of interneurons and retinal ganglion cells (RGCs) and promotes synaptic connectivity via homophilic interactions. The chain is Protein sidekick-2 from Gallus gallus (Chicken).